The primary structure comprises 84 residues: Large ribosomal subunit protein uL23 (84 aa).

Belongs to the universal ribosomal protein uL23 family. In terms of assembly, part of the 50S ribosomal subunit. Contacts protein L29.

Functionally, binds to 23S rRNA. One of the proteins that surrounds the polypeptide exit tunnel on the outside of the ribosome. The protein is Large ribosomal subunit protein uL23 of Thermoplasma acidophilum (strain ATCC 25905 / DSM 1728 / JCM 9062 / NBRC 15155 / AMRC-C165).